The sequence spans 535 residues: GMP synthase [glutamine-hydrolyzing] (535 aa).

Positions 4–210 constitute a Glutamine amidotransferase type-1 domain; the sequence is KILILDFGSQ…VHEICHCKPD (207 aa). Catalysis depends on cysteine 85, which acts as the Nucleophile. Catalysis depends on residues histidine 184 and glutamate 186. Positions 211–403 constitute a GMPS ATP-PPase domain; sequence WVMGDYIAEA…LGLPREMVYR (193 aa). 238 to 244 contributes to the ATP binding site; the sequence is SGGVDSS.

Homodimer.

It catalyses the reaction XMP + L-glutamine + ATP + H2O = GMP + L-glutamate + AMP + diphosphate + 2 H(+). It functions in the pathway purine metabolism; GMP biosynthesis; GMP from XMP (L-Gln route): step 1/1. In terms of biological role, catalyzes the synthesis of GMP from XMP. This chain is GMP synthase [glutamine-hydrolyzing], found in Polynucleobacter asymbioticus (strain DSM 18221 / CIP 109841 / QLW-P1DMWA-1) (Polynucleobacter necessarius subsp. asymbioticus).